The chain runs to 584 residues: MLKNKTRAEKYQTYYTTNEYQIVKEKLPDIIRDAEIKASEVLEPTIYEKRAIMEVIKDFIRDHQRKVYGGTALNEALKQVNPKDAIYDNYSFSDIEFYSPTPVQDLVDLCNILYRKGYKFVQGKDAQHEETYSIFVNFQLYCDITYSPTRVFYGIKTIEIDGINYTDPHFMLIDYLRMVNQPLTAAGQRWEKAFERMYRLLKDYPIEDFDKRLDIPEPPEEIQSYISRIKTEFLSDNKLNESFLISGIEAYNFYIRHAASSKDEEQMARTNRNVVNLNNFIANVPFSELISVNYREDVKNTYNFLRMIVEDKEKISVDEYFPLFQFTGYSTVIKYDDHPIIRIYEGDGYCIPNVKTVKTVENDNGTKTKYEYKYVSFQYVLMILYINKFRAHLDKNKPMYFNYGIAISNLVKARNIYLDQTGKSVLDNTVFKEFRTNCTGNTISFTRMNRLRLLEKRKQGKQTSFVYTPEDFFKKDLETQAKLDPSKARFKNTSGNKIMVPKYLLFKIDNNGNIEDNIHSEEAEISEKEETSGGSSISTDKSFEESPNSSPNSSPNNSLNNSIDISTNNYDDRSENSLDSLTSD.

The span at Glu-522–Thr-531 shows a compositional bias: basic and acidic residues. Positions Glu-522–Asp-584 are disordered. The segment covering Ser-546 to Asn-569 has biased composition (low complexity).

This sequence belongs to the poxviridae poly(A) polymerase catalytic subunit family. Highly divergent.

It is found in the virion. It catalyses the reaction RNA(n) + ATP = RNA(n)-3'-adenine ribonucleotide + diphosphate. In terms of biological role, polymerase that creates the 3'-poly(A) tail of mRNA's. The polypeptide is Putative poly(A) polymerase catalytic subunit (Acanthamoeba polyphaga (Amoeba)).